The primary structure comprises 170 residues: Large ribosomal subunit protein uL16 (170 aa).

This sequence belongs to the universal ribosomal protein uL16 family.

This Methanospirillum hungatei JF-1 (strain ATCC 27890 / DSM 864 / NBRC 100397 / JF-1) protein is Large ribosomal subunit protein uL16.